We begin with the raw amino-acid sequence, 80 residues long: uncharacterized protein (80 aa).

The protein belongs to the 2-oxoacid dehydrogenase family.

This is an uncharacterized protein from Mycobacterium tuberculosis (strain CDC 1551 / Oshkosh).